The following is a 429-amino-acid chain: Hydrogenobyrinate a,c-diamide synthase (429 aa).

In terms of domain architecture, GATase cobBQ-type spans 240 to 429; it reads RTAVARDVAF…SFMHLIDFSE (190 aa). C323 acts as the Nucleophile in catalysis.

Belongs to the CobB/CbiA family. It depends on Mg(2+) as a cofactor.

The catalysed reaction is hydrogenobyrinate + 2 L-glutamine + 2 ATP + 2 H2O = hydrogenobyrinate a,c-diamide + 2 L-glutamate + 2 ADP + 2 phosphate + 2 H(+). It functions in the pathway cofactor biosynthesis; adenosylcobalamin biosynthesis; cob(II)yrinate a,c-diamide from precorrin-2 (aerobic route): step 9/10. In terms of biological role, catalyzes the ATP-dependent amidation of the two carboxylate groups at positions a and c of hydrogenobyrinate, using either L-glutamine or ammonia as the nitrogen source. The chain is Hydrogenobyrinate a,c-diamide synthase from Rhizobium meliloti (strain 1021) (Ensifer meliloti).